Consider the following 389-residue polypeptide: Tyrosinase-like protein phomQ1 (389 aa).

A helical membrane pass occupies residues 53–73; sequence TIIVVSVITFAAIIGCWVFLS. Residues H141 and H150 each contribute to the Cu cation site. N-linked (GlcNAc...) asparagine glycosylation occurs at N220. Positions 290 and 316 each coordinate Cu cation.

The protein belongs to the tyrosinase family. Cu(2+) serves as cofactor.

The protein localises to the membrane. Its pathway is mycotoxin biosynthesis. In terms of biological role, tyrosinase-like protein; part of the gene cluster that mediates the biosynthesis of the phomopsins, a group of hexapeptide mycotoxins which infects lupins and causes lupinosis disease in livestock. Within the pathway, phomQ1 functions as a halogenase, converting. The pathway starts with the processing of the precursor phomA by several endopeptidases including kexin proteases as well as the cluster-specific S41 family peptidase phomP1 and the oligopeptidase phomG to produce 10 identical copies of the hexapeptide Tyr-Val-Ile-Pro-Ile-Asp. After being excised from the precursor peptide, the core peptides are cyclized and modified post-translationally by enzymes encoded within the gene cluster. The timing and order of proteolysis of the phomA precursor and PTMs are still unknown. Two tyrosinase-like enzymes, phomQ1 and phomQ2, catalyze the chlorination and hydroxylation of Tyr, respectively. PhomYb, is proposed to be involved in the construction of the macrocyclic structure. The other 4 ustYa family proteins may be involved in PTMs that generate the unique structure of phomopsin A. PhomYa is required for the hydroxylation of C-beta of Tyr. PhomYc, phomYd, and phomYe are responsible for the biosynthesis of 2,3-dehydroisoleucine (dIle), 2,3-dehydroaspartic acid (dAsp), and 3,4-dehydroproline (dPro), respectively. While dIle formation by phomYc is indispensable for the installation of dAsp by phomYd, the order of the other PTMs have not been elucidated yet. Most of the biosynthetic enzymes likely have broad substrate specificity, and thus, there might be a metabolic grid from a precursor to phomopsin A. The enzyme(s) responsible for the biosynthesis of 3,4-dehydrovaline (dVal) have also not been identified yet. Finally, phomM acts as an S-adenosylmethionine-dependent alpha-N-methyltransferase that catalyzes two successive N-methylation reactions, converting N-desmethyl-phomopsin A to phomopsin A and phomopsin A further to an N,N-dimethylated congener called phomopsin E. The protein is Tyrosinase-like protein phomQ1 of Diaporthe leptostromiformis (Lupinosis disease fungus).